The chain runs to 458 residues: Ectonucleotide pyrophosphatase/phosphodiesterase family member 7 (458 aa).

The first 21 residues, 1–21 (MRGPAVLLTVALATLLAPGAG), serve as a signal peptide directing secretion. Topologically, residues 22 to 433 (APVQSQGSQN…RPTLLPKGRS (412 aa)) are extracellular. Positions 39 and 75 each coordinate Zn(2+). The required for enzyme activity stretch occupies residues 72-78 (VTMTSPC). Thr75 acts as the Nucleophile in catalysis. Residue Asn96 participates in substrate binding. N-linked (GlcNAc...) asparagine glycosylation is found at Asn100, Asn121, Asn146, and Asn168. Zn(2+)-binding residues include Asp199, His203, Asp246, and His247. The N-linked (GlcNAc...) asparagine glycan is linked to Asn267. His353 contacts Zn(2+). A helical transmembrane segment spans residues 434-454 (ALPPSSRPLLVMGLLGTVILL). Topologically, residues 455–458 (SEVA) are cytoplasmic.

This sequence belongs to the nucleotide pyrophosphatase/phosphodiesterase family. Zn(2+) is required as a cofactor. Post-translationally, N-glycosylated; required for activity and transport to the plasma membrane. In terms of tissue distribution, detected in the colon (at protein level). Expressed in the duodenum, jejunum and liver and at low levels in the ileum. Expression was very low in the esophagus, stomach and colon.

Its subcellular location is the cell membrane. It catalyses the reaction a sphingomyelin + H2O = phosphocholine + an N-acylsphing-4-enine + H(+). It carries out the reaction 1-hexadecanoyl-sn-glycero-3-phosphocholine + H2O = 1-hexadecanoyl-sn-glycerol + phosphocholine + H(+). The enzyme catalyses a 1-O-alkyl-2-acetyl-sn-glycero-3-phosphocholine + H2O = a 1-O-alkyl-2-acetyl-sn-glycerol + phosphocholine + H(+). The catalysed reaction is 1-O-octadecyl-2-acetyl-sn-glycero-3-phosphocholine + H2O = 1-O-octadecyl-2-acetyl-sn-glycerol + phosphocholine + H(+). With respect to regulation, inhibited in a dose dependent manner by ATP, imidazole, orthovanadate and zinc ion. Not inhibited by ADP, AMP and EDTA. Its function is as follows. Choline-specific phosphodiesterase that hydrolyzes sphingomyelin releasing the ceramide and phosphocholine and therefore is involved in sphingomyelin digestion, ceramide formation, and fatty acid (FA) absorption in the gastrointestinal tract. Also has phospholipase C activity and can also cleave phosphocholine from palmitoyl lyso-phosphatidylcholine and platelet-activating factor (PAF) leading to its inactivation. Does not have nucleotide pyrophosphatase activity. May promote cholesterol absorption by affecting the levels of sphingomyelin derived from either diet or endogenous sources, in the intestinal lumen. The chain is Ectonucleotide pyrophosphatase/phosphodiesterase family member 7 from Homo sapiens (Human).